The chain runs to 370 residues: DNA replication and repair protein RecF (370 aa).

30–37 lines the ATP pocket; it reads GENAQGKT.

This sequence belongs to the RecF family.

It is found in the cytoplasm. Its function is as follows. The RecF protein is involved in DNA metabolism; it is required for DNA replication and normal SOS inducibility. RecF binds preferentially to single-stranded, linear DNA. It also seems to bind ATP. The chain is DNA replication and repair protein RecF from Bacillus pumilus (strain SAFR-032).